The following is a 298-amino-acid chain: UDP-N-acetylenolpyruvoylglucosamine reductase (298 aa).

In terms of domain architecture, FAD-binding PCMH-type spans 26–191; it reads KTGGAADVFV…LDATFSLALE (166 aa). Residue arginine 170 is part of the active site. The active-site Proton donor is the serine 220. The active site involves glutamate 290.

This sequence belongs to the MurB family. FAD is required as a cofactor.

Its subcellular location is the cytoplasm. The enzyme catalyses UDP-N-acetyl-alpha-D-muramate + NADP(+) = UDP-N-acetyl-3-O-(1-carboxyvinyl)-alpha-D-glucosamine + NADPH + H(+). It functions in the pathway cell wall biogenesis; peptidoglycan biosynthesis. Its function is as follows. Cell wall formation. The chain is UDP-N-acetylenolpyruvoylglucosamine reductase from Listeria monocytogenes serotype 4b (strain CLIP80459).